A 159-amino-acid polypeptide reads, in one-letter code: 2-C-methyl-D-erythritol 2,4-cyclodiphosphate synthase (159 aa).

Positions 10 and 12 each coordinate a divalent metal cation. 4-CDP-2-C-methyl-D-erythritol 2-phosphate-binding positions include 10 to 12 (DVH) and 37 to 38 (HS). His45 provides a ligand contact to a divalent metal cation. 4-CDP-2-C-methyl-D-erythritol 2-phosphate contacts are provided by residues 59-61 (DIG), 64-68 (FPDTD), 103-109 (AQAPKML), 135-138 (TTTE), Phe142, and Arg145.

It belongs to the IspF family. Homotrimer. Requires a divalent metal cation as cofactor.

It catalyses the reaction 4-CDP-2-C-methyl-D-erythritol 2-phosphate = 2-C-methyl-D-erythritol 2,4-cyclic diphosphate + CMP. It participates in isoprenoid biosynthesis; isopentenyl diphosphate biosynthesis via DXP pathway; isopentenyl diphosphate from 1-deoxy-D-xylulose 5-phosphate: step 4/6. Functionally, involved in the biosynthesis of isopentenyl diphosphate (IPP) and dimethylallyl diphosphate (DMAPP), two major building blocks of isoprenoid compounds. Catalyzes the conversion of 4-diphosphocytidyl-2-C-methyl-D-erythritol 2-phosphate (CDP-ME2P) to 2-C-methyl-D-erythritol 2,4-cyclodiphosphate (ME-CPP) with a corresponding release of cytidine 5-monophosphate (CMP). The polypeptide is 2-C-methyl-D-erythritol 2,4-cyclodiphosphate synthase (Francisella tularensis subsp. novicida (strain U112)).